We begin with the raw amino-acid sequence, 743 residues long: 1,4-alpha-glucan branching enzyme GlgB (743 aa).

Aspartate 416 functions as the Nucleophile in the catalytic mechanism. Glutamate 469 acts as the Proton donor in catalysis.

This sequence belongs to the glycosyl hydrolase 13 family. GlgB subfamily. Monomer.

It carries out the reaction Transfers a segment of a (1-&gt;4)-alpha-D-glucan chain to a primary hydroxy group in a similar glucan chain.. It functions in the pathway glycan biosynthesis; glycogen biosynthesis. In terms of biological role, catalyzes the formation of the alpha-1,6-glucosidic linkages in glycogen by scission of a 1,4-alpha-linked oligosaccharide from growing alpha-1,4-glucan chains and the subsequent attachment of the oligosaccharide to the alpha-1,6 position. This chain is 1,4-alpha-glucan branching enzyme GlgB, found in Shewanella baltica (strain OS155 / ATCC BAA-1091).